The following is a 34-amino-acid chain: Beta/mu-theraphotoxin-Pe1a (34 aa).

Cystine bridges form between Cys2-Cys16, Cys9-Cys21, and Cys15-Cys28.

Belongs to the neurotoxin 10 (Hwtx-1) family. 54 (ProTx-1) subfamily. As to expression, expressed by the venom gland.

It is found in the secreted. Its function is as follows. Ion channel impairing toxin that inhibits voltage-gated sodium channels. The recombinantly expressed toxin shows a weak activity against Nav1.7/SCN9A (25% inhibition at 10 uM), and shifts the voltage dependence of channel activation to more depolarized potentials. The sequence is that of Beta/mu-theraphotoxin-Pe1a from Phormingochilus everetti (Malaysian purple earth tiger tarantula).